Reading from the N-terminus, the 570-residue chain is Methyl-coenzyme M reductase subunit alpha (570 aa).

Residue Gln-161 coordinates coenzyme F430. Residues Arg-239, 270-271, and Arg-284 each bind coenzyme B; that span reads KH. Position 271 is a pros-methylhistidine (His-271). Arg-285 carries the 5-methylarginine modification. Coenzyme M contacts are provided by Tyr-346 and Phe-464. Gly-465 is subject to 1-thioglycine. Asp-470 carries the (Z)-2,3-didehydroaspartate modification. Cys-472 is subject to S-methylcysteine.

It belongs to the methyl-coenzyme M reductase alpha subunit family. In terms of assembly, MCR is a hexamer of two alpha, two beta, and two gamma chains, forming a dimer of heterotrimers. Requires coenzyme F430 as cofactor. Post-translationally, the alpha subunit contains five modified amino acids near the active site region. Is methylated on His-271, Arg-285 and Cys-472, probably by the action of specific S-adenosylmethionine-dependent methyltransferases. Also contains a thioglycine at position 465, forming a thiopeptide bond. Contains a didehydroaspartate residue at position 470. The methylation on C5 of Arg-285 is a post-translational methylation not essential in vivo, but which plays a role for the stability and structural integrity of MCR. Does not show a methylation at Gln-420, as shown for M.marburgensis.

It is found in the cytoplasm. The enzyme catalyses coenzyme B + methyl-coenzyme M = methane + coenzyme M-coenzyme B heterodisulfide. Its pathway is one-carbon metabolism; methyl-coenzyme M reduction; methane from methyl-coenzyme M: step 1/1. Functionally, component of the methyl-coenzyme M reductase (MCR) I that catalyzes the reductive cleavage of methyl-coenzyme M (CoM-S-CH3 or 2-(methylthio)ethanesulfonate) using coenzyme B (CoB or 7-mercaptoheptanoylthreonine phosphate) as reductant which results in the production of methane and the mixed heterodisulfide of CoB and CoM (CoM-S-S-CoB). This is the final step in methanogenesis. In Methanosarcina barkeri (strain Fusaro / DSM 804), this protein is Methyl-coenzyme M reductase subunit alpha (mcrA).